A 336-amino-acid polypeptide reads, in one-letter code: Peroxidase 72 (336 aa).

The first 23 residues, Met1–Cys23, serve as a signal peptide directing secretion. 4 disulfides stabilise this stretch: Cys42–Cys122, Cys75–Cys80, Cys128–Cys329, and Cys207–Cys239. The active-site Proton acceptor is His73. Residues Asp74, Val77, Gly79, Asp81, and Ser83 each coordinate Ca(2+). Pro170 serves as a coordination point for substrate. An N-linked (GlcNAc...) asparagine glycan is attached at Asn173. His200 serves as a coordination point for heme b. Ca(2+) is bound at residue Thr201. Asn216 carries an N-linked (GlcNAc...) asparagine glycan. Ca(2+) is bound by residues Asp252, Thr255, and Asp260.

Belongs to the peroxidase family. Classical plant (class III) peroxidase subfamily. Heme b is required as a cofactor. Requires Ca(2+) as cofactor. As to expression, slightly expressed in roots.

The protein localises to the secreted. The enzyme catalyses 2 a phenolic donor + H2O2 = 2 a phenolic radical donor + 2 H2O. Functionally, removal of H(2)O(2), oxidation of toxic reductants, biosynthesis and degradation of lignin, suberization, auxin catabolism, response to environmental stresses such as wounding, pathogen attack and oxidative stress. These functions might be dependent on each isozyme/isoform in each plant tissue. The sequence is that of Peroxidase 72 (PER72) from Arabidopsis thaliana (Mouse-ear cress).